The chain runs to 85 residues: Translation initiation factor IF-1 2 (85 aa).

Residues 1-72 (MAKEELIEMQ…TKGRITFRHL (72 aa)) form the S1-like domain.

Belongs to the IF-1 family. As to quaternary structure, component of the 30S ribosomal translation pre-initiation complex which assembles on the 30S ribosome in the order IF-2 and IF-3, IF-1 and N-formylmethionyl-tRNA(fMet); mRNA recruitment can occur at any time during PIC assembly.

The protein localises to the cytoplasm. In terms of biological role, one of the essential components for the initiation of protein synthesis. Stabilizes the binding of IF-2 and IF-3 on the 30S subunit to which N-formylmethionyl-tRNA(fMet) subsequently binds. Helps modulate mRNA selection, yielding the 30S pre-initiation complex (PIC). Upon addition of the 50S ribosomal subunit IF-1, IF-2 and IF-3 are released leaving the mature 70S translation initiation complex. This chain is Translation initiation factor IF-1 2, found in Paracidovorax citrulli (strain AAC00-1) (Acidovorax citrulli).